A 434-amino-acid polypeptide reads, in one-letter code: MDDQSRMLQTLAGVNLAGHSVQGGMALPPPPHGHEGADGDGRKQDIGDILHQIMTITDQSLDEAQAKKHALNCHRMKPALFSVLCEIKEKTGLSIRGAQEEDPPDPQLMRLDNMLLAEGVSGPEKGGGSAAAAAAAAASGGSSDNSIEHSDYRAKLTQIRQIYHTELEKYEQACNEFTTHVMNLLREQSRTRPISPKEIERMVGIIHRKFSSIQMQLKQSTCEAVMILRSRFLDARRKRRNFSKQATEILNEYFYSHLSNPYPSEEAKEELAKKCSITVSQVSNWFGNKRIRYKKNIGKFQEEANLYAAKTAVTAAHAVAAAVQNNQTNSPTTPNSGSSGSFNLPNSGDMFMNMQSLNGDSYQGSQVGANVQSQVDTLRHVINQTGGYSDGLGGNSLYSPHNLNANGGWQDATTPSSVTSPTEGPGSVHSDTSN.

The interval 20–41 (SVQGGMALPPPPHGHEGADGDG) is disordered. The segment covering 32–41 (HGHEGADGDG) has biased composition (basic and acidic residues). The PBC domain occupies 41 to 234 (GRKQDIGDIL…VMILRSRFLD (194 aa)). A PBC-A region spans residues 48 to 127 (DILHQIMTIT…EGVSGPEKGG (80 aa)). The interval 130–234 (AAAAAAAAAS…VMILRSRFLD (105 aa)) is PBC-B. The segment at residues 235-297 (ARRKRRNFSK…NKRIRYKKNI (63 aa)) is a DNA-binding region (homeobox; TALE-type). Residues 326–341 (NQTNSPTTPNSGSSGS) show a composition bias toward low complexity. Disordered regions lie at residues 326 to 349 (NQTNSPTTPNSGSSGSFNLPNSGD) and 403 to 434 (LNANGGWQDATTPSSVTSPTEGPGSVHSDTSN). Residues 403-422 (LNANGGWQDATTPSSVTSPT) show a composition bias toward polar residues.

It belongs to the TALE/PBX homeobox family. In terms of assembly, interacts with PBXIP1. In terms of tissue distribution, ubiquitously expressed.

It localises to the nucleus. In terms of biological role, transcriptional activator that binds the sequence 5'-ATCAATCAA-3'. The chain is Pre-B-cell leukemia transcription factor 3 (PBX3) from Homo sapiens (Human).